The following is a 263-amino-acid chain: tRNA1(Val) (adenine(37)-N6)-methyltransferase (263 aa).

Belongs to the methyltransferase superfamily. tRNA (adenine-N(6)-)-methyltransferase family.

It localises to the cytoplasm. It catalyses the reaction adenosine(37) in tRNA1(Val) + S-adenosyl-L-methionine = N(6)-methyladenosine(37) in tRNA1(Val) + S-adenosyl-L-homocysteine + H(+). In terms of biological role, specifically methylates the adenine in position 37 of tRNA(1)(Val) (anticodon cmo5UAC). The sequence is that of tRNA1(Val) (adenine(37)-N6)-methyltransferase from Pseudoalteromonas atlantica (strain T6c / ATCC BAA-1087).